Here is a 363-residue protein sequence, read N- to C-terminus: UDP-N-acetylglucosamine--N-acetylmuramyl-(pentapeptide) pyrophosphoryl-undecaprenol N-acetylglucosamine transferase (363 aa).

UDP-N-acetyl-alpha-D-glucosamine contacts are provided by residues 12-14, arginine 166, serine 196, and glutamine 291; that span reads TAG.

This sequence belongs to the glycosyltransferase 28 family. MurG subfamily.

It is found in the cell inner membrane. It carries out the reaction di-trans,octa-cis-undecaprenyl diphospho-N-acetyl-alpha-D-muramoyl-L-alanyl-D-glutamyl-meso-2,6-diaminopimeloyl-D-alanyl-D-alanine + UDP-N-acetyl-alpha-D-glucosamine = di-trans,octa-cis-undecaprenyl diphospho-[N-acetyl-alpha-D-glucosaminyl-(1-&gt;4)]-N-acetyl-alpha-D-muramoyl-L-alanyl-D-glutamyl-meso-2,6-diaminopimeloyl-D-alanyl-D-alanine + UDP + H(+). Its pathway is cell wall biogenesis; peptidoglycan biosynthesis. Cell wall formation. Catalyzes the transfer of a GlcNAc subunit on undecaprenyl-pyrophosphoryl-MurNAc-pentapeptide (lipid intermediate I) to form undecaprenyl-pyrophosphoryl-MurNAc-(pentapeptide)GlcNAc (lipid intermediate II). This is UDP-N-acetylglucosamine--N-acetylmuramyl-(pentapeptide) pyrophosphoryl-undecaprenol N-acetylglucosamine transferase from Legionella pneumophila (strain Paris).